A 140-amino-acid chain; its full sequence is uncharacterized protein (140 aa).

A coiled-coil region spans residues 27–65 (LLGEVSELELQKICFNRSLRNEINQLEEQNDISFVRVER).

This is an uncharacterized protein from Pasteurella multocida (strain Pm70).